The following is a 392-amino-acid chain: 8-amino-7-oxononanoate synthase 1 (392 aa).

Residue 109–110 (GF) participates in pyridoxal 5'-phosphate binding. H134 contacts substrate. Pyridoxal 5'-phosphate contacts are provided by residues S181, 206 to 209 (DDAH), and 237 to 240 (TLSK). K240 carries the N6-(pyridoxal phosphate)lysine modification. T354 is a binding site for substrate.

Belongs to the class-II pyridoxal-phosphate-dependent aminotransferase family. BioF subfamily. As to quaternary structure, homodimer. Pyridoxal 5'-phosphate serves as cofactor.

The enzyme catalyses 6-carboxyhexanoyl-[ACP] + L-alanine + H(+) = (8S)-8-amino-7-oxononanoate + holo-[ACP] + CO2. It participates in cofactor biosynthesis; biotin biosynthesis. Catalyzes the decarboxylative condensation of pimeloyl-[acyl-carrier protein] and L-alanine to produce 8-amino-7-oxononanoate (AON), [acyl-carrier protein], and carbon dioxide. This chain is 8-amino-7-oxononanoate synthase 1 (kbl), found in Bacillus subtilis (strain 168).